A 459-amino-acid polypeptide reads, in one-letter code: Phosphomethylpyrimidine synthase (459 aa).

Residues Asn81, Met110, Tyr140, His176, 196-198 (SRG), 237-240 (DSLR), and Glu276 contribute to the substrate site. His280 provides a ligand contact to Zn(2+). Tyr303 serves as a coordination point for substrate. His344 lines the Zn(2+) pocket. Positions 424, 427, and 432 each coordinate [4Fe-4S] cluster.

Belongs to the ThiC family. It depends on [4Fe-4S] cluster as a cofactor.

The catalysed reaction is 5-amino-1-(5-phospho-beta-D-ribosyl)imidazole + S-adenosyl-L-methionine = 4-amino-2-methyl-5-(phosphooxymethyl)pyrimidine + CO + 5'-deoxyadenosine + formate + L-methionine + 3 H(+). Its pathway is cofactor biosynthesis; thiamine diphosphate biosynthesis. Catalyzes the synthesis of the hydroxymethylpyrimidine phosphate (HMP-P) moiety of thiamine from aminoimidazole ribotide (AIR) in a radical S-adenosyl-L-methionine (SAM)-dependent reaction. The sequence is that of Phosphomethylpyrimidine synthase from Gloeobacter violaceus (strain ATCC 29082 / PCC 7421).